The primary structure comprises 246 residues: Mast cell protease 1 (246 aa).

Positions 1 to 18 (MQALLFLLALLWPPEAGA) are cleaved as a signal peptide. A propeptide spans 19–20 (EE) (activation peptide). The Peptidase S1 domain maps to 21–244 (IIGGVESKPH…YVPWINLVIR (224 aa)). An intrachain disulfide couples Cys-50 to Cys-66. Active-site charge relay system residues include His-65 and Asp-109. 2 cysteine pairs are disulfide-bonded: Cys-143-Cys-208 and Cys-174-Cys-187. The Charge relay system role is filled by Ser-202.

Belongs to the peptidase S1 family. Granzyme subfamily.

The sequence is that of Mast cell protease 1 from Meriones unguiculatus (Mongolian jird).